Reading from the N-terminus, the 500-residue chain is Dipeptide and tripeptide permease A (500 aa).

At Met1–Lys21 the chain is on the cytoplasmic side. A helical transmembrane segment spans residues Ala22–Met44. The Periplasmic portion of the chain corresponds to Ala45–Ser59. The helical transmembrane segment at Ile60–Leu80 threads the bilayer. Over Gly81 to Arg89 the chain is Cytoplasmic. A helical membrane pass occupies residues Val90–His110. Residue Asp111 is a topological domain, periplasmic. The helical transmembrane segment at Ala112–Asn132 threads the bilayer. The Cytoplasmic segment spans residues Pro133–Thr153. The helical transmembrane segment at Met154 to Ala174 threads the bilayer. Over Ala175 to Gly178 the chain is Periplasmic. Residues Trp179–Phe199 traverse the membrane as a helical segment. Residues Cys200–Arg219 are Cytoplasmic-facing. The chain crosses the membrane as a helical span at residues Asn220–His240. At Asn241–Arg246 the chain is on the periplasmic side. A helical transmembrane segment spans residues Met247–Met267. Topologically, residues Lys268–Lys274 are cytoplasmic. Residues Met275 to Met295 form a helical membrane-spanning segment. The Periplasmic portion of the chain corresponds to Pro296–Gln320. A helical transmembrane segment spans residues Tyr321–Asn341. The Cytoplasmic segment spans residues Lys342–Lys352. Residues Phe353–Phe373 form a helical membrane-spanning segment. At Ala374–Gly378 the chain is on the periplasmic side. Residues Ile379 to Ile399 form a helical membrane-spanning segment. Residues Ser400–Arg414 are Cytoplasmic-facing. A helical transmembrane segment spans residues Leu415–Gly435. The Periplasmic segment spans residues Tyr436–Arg459. A helical transmembrane segment spans residues Val460–Pro480. Residues Lys481 to Ala500 lie on the Cytoplasmic side of the membrane.

Belongs to the major facilitator superfamily. Proton-dependent oligopeptide transporter (POT/PTR) (TC 2.A.17) family. DtpA subfamily. In terms of assembly, monomer. Has a crown-like structure with a diameter of 8 nm and a central density.

Its subcellular location is the cell inner membrane. In terms of biological role, proton-dependent permease that transports di- and tripeptides as well as structurally related peptidomimetics such as aminocephalosporins into the cell. Has a clear preference for dipeptides and tripeptides composed of L-amino acids, and discriminates dipeptides on the basis of the position of charges within the substrate. This is Dipeptide and tripeptide permease A (dtpA) from Escherichia coli (strain K12).